The following is a 417-amino-acid chain: NADH-quinone oxidoreductase subunit D (417 aa).

The protein belongs to the complex I 49 kDa subunit family. NDH-1 is composed of 14 different subunits. Subunits NuoB, C, D, E, F, and G constitute the peripheral sector of the complex.

The protein localises to the cell inner membrane. The enzyme catalyses a quinone + NADH + 5 H(+)(in) = a quinol + NAD(+) + 4 H(+)(out). Functionally, NDH-1 shuttles electrons from NADH, via FMN and iron-sulfur (Fe-S) centers, to quinones in the respiratory chain. The immediate electron acceptor for the enzyme in this species is believed to be ubiquinone. Couples the redox reaction to proton translocation (for every two electrons transferred, four hydrogen ions are translocated across the cytoplasmic membrane), and thus conserves the redox energy in a proton gradient. This chain is NADH-quinone oxidoreductase subunit D, found in Albidiferax ferrireducens (strain ATCC BAA-621 / DSM 15236 / T118) (Rhodoferax ferrireducens).